A 396-amino-acid chain; its full sequence is Zinc metalloproteinase nas-24 (396 aa).

The N-terminal stretch at M1–C20 is a signal peptide. The Peptidase M12A domain occupies E44–G230. Residues N63 and N79 are each glycosylated (N-linked (GlcNAc...) asparagine). 4 disulfide bridges follow: C82–C229, C105–C129, C231–C251, and C253–C262. Zn(2+) is bound at residue H137. E138 is a catalytic residue. Zn(2+) contacts are provided by H141 and H147. Residues N224–N263 form the EGF-like domain. An N-linked (GlcNAc...) asparagine glycan is attached at N310.

Zn(2+) is required as a cofactor.

The protein localises to the secreted. In terms of biological role, metalloprotease. The protein is Zinc metalloproteinase nas-24 (nas-24) of Caenorhabditis elegans.